The following is a 119-amino-acid chain: ATP-dependent Clp protease adapter protein ClpS (119 aa).

Residues 1–29 are disordered; sequence MICPPGENKSMAERKQGGQGNGVGSSVVT.

This sequence belongs to the ClpS family. In terms of assembly, binds to the N-terminal domain of the chaperone ClpA.

Involved in the modulation of the specificity of the ClpAP-mediated ATP-dependent protein degradation. The chain is ATP-dependent Clp protease adapter protein ClpS from Caulobacter vibrioides (strain ATCC 19089 / CIP 103742 / CB 15) (Caulobacter crescentus).